Consider the following 704-residue polypeptide: Elongation factor G (704 aa).

The tr-type G domain maps to 8–291 (DKVRNIGIMA…AVVEYLASPV (284 aa)). GTP is bound by residues 17-24 (AHIDAGKT), 90-94 (DTPGH), and 144-147 (NKMD).

This sequence belongs to the TRAFAC class translation factor GTPase superfamily. Classic translation factor GTPase family. EF-G/EF-2 subfamily.

The protein resides in the cytoplasm. Its function is as follows. Catalyzes the GTP-dependent ribosomal translocation step during translation elongation. During this step, the ribosome changes from the pre-translocational (PRE) to the post-translocational (POST) state as the newly formed A-site-bound peptidyl-tRNA and P-site-bound deacylated tRNA move to the P and E sites, respectively. Catalyzes the coordinated movement of the two tRNA molecules, the mRNA and conformational changes in the ribosome. This Chlorobium phaeobacteroides (strain DSM 266 / SMG 266 / 2430) protein is Elongation factor G.